We begin with the raw amino-acid sequence, 216 residues long: Protein Syd (216 aa).

It belongs to the Syd family.

The protein resides in the cell inner membrane. Its function is as follows. Interacts with the SecY protein in vivo. May bind preferentially to an uncomplexed state of SecY, thus functioning either as a chelating agent for excess SecY in the cell or as a regulatory factor that negatively controls the translocase function. This is Protein Syd from Shewanella putrefaciens (strain CN-32 / ATCC BAA-453).